Consider the following 191-residue polypeptide: Signal peptidase complex catalytic subunit sec11 (191 aa).

Residues 1-18 (MLSALGGNLSNARQSIAQ) are Cytoplasmic-facing. The chain crosses the membrane as a helical; Signal-anchor for type II membrane protein span at residues 19 to 39 (VLNFALVLSTAFMLWKGVSIA). Over 40–191 (SNSSSPIVVV…MGLMVILQRE (152 aa)) the chain is Lumenal. N-linked (GlcNAc...) asparagine glycosylation occurs at Asn-41. Active-site charge relay system residues include Ser-53, His-92, and Asp-133. Positions 177 to 188 (VLLGVMGLMVIL) are C-terminal short (CTS) helix.

This sequence belongs to the peptidase S26B family. In terms of assembly, component of the signal peptidase complex (SPC) composed of a catalytic subunit SEC11 and three accessory subunits SPC1, SPC2 and SPC3. The complex induces a local thinning of the ER membrane which is used to measure the length of the signal peptide (SP) h-region of protein substrates. This ensures the selectivity of the complex towards h-regions shorter than 18-20 amino acids. SPC associates with the translocon complex.

It is found in the endoplasmic reticulum membrane. It carries out the reaction Cleavage of hydrophobic, N-terminal signal or leader sequences from secreted and periplasmic proteins.. Its function is as follows. Catalytic component of the signal peptidase complex (SPC) which catalyzes the cleavage of N-terminal signal sequences from nascent proteins as they are translocated into the lumen of the endoplasmic reticulum. Specifically cleaves N-terminal signal peptides that contain a hydrophobic alpha-helix (h-region) shorter than 18-20 amino acids. The polypeptide is Signal peptidase complex catalytic subunit sec11 (sec11) (Talaromyces marneffei (strain ATCC 18224 / CBS 334.59 / QM 7333) (Penicillium marneffei)).